Reading from the N-terminus, the 270-residue chain is Regulatory protein RecX (270 aa).

Belongs to the RecX family.

The protein resides in the cytoplasm. In terms of biological role, modulates RecA activity. The chain is Regulatory protein RecX from Bacillus cytotoxicus (strain DSM 22905 / CIP 110041 / 391-98 / NVH 391-98).